The sequence spans 1317 residues: MFNKSVNSGFTFGNQNTSTPTSTPAQPSSSLQFPQKSTGLFGNVNVNANTSTPSPSGGLFNANSNANSISQQPANNSLFGNKPAQPSGGLFGATNNTTSKSAGSLFGNNNATANSTGSTGLFSGSNNIASSTQNGGLFGNSNNNNITSTTQNGGLFGKPTTTPAGAGGLFGNSSSTNSTTGLFGSNNTQSSTGIFGQKPGASTTGGLFGNNGASFPRSGETTGTMSTNPYGINISNVPMAVADMPRSITSSLSDVNGKSDAEPKPIENRRTYSFSSSVSGNAPLPLASQSSLVSRLSTRLKATQKSTSPNEIFSPSYSKPWLNGAGSAPLVDDFFSSKMTSLAPNENSIFPQNGFNFLSSQRADLTELRKLKIDSNRSAAKKLKLLSGTPAITKKHMQDEQDSSENEPIANADSVTNIDRKENRDNNLDNTYLNGKEQSNNLNKQDGENTLQHEKSSSFGYWCSPSPEQLERLSLKQLAAVSNFVIGRRGYGCITFQHDVDLTAFTKSFREELFGKIVIFRSSKTVEVYPDEATKPMIGHGLNVPAIITLENVYPVDKKTKKPMKDTTKFAEFQVFDRKLRSMREMNYISYNPFGGTWTFKVNHFSIWGLVNEEDAEIDEDDLSKQEDGGEQPLRKVRTLAQSKPSDKEVILKTDGTFGTLSGKDDSIVEEKAYEPDLSDADFEGIEASPKLDVSKDWVEQLILAGSSLRSVFATSKEFDGPCQNEIDLLFSECNDEIDNAKLIMKERRFTASYTFAKFSTGSMLLTKDIVGKSGVSIKRLPTELQRKFLFDDVYLDKEIEKVTIEARKSNPYPQISESSLLFKDALDYMEKTSSDYNLWKLSSILFDPVSYPYKTDNDQVKMALLKKERHCRLTSWIVSQIGPEIEEKIRNSSNEIEQIFLYLLLNDVVRASKLAIESKNGHLSVLISYLGSNDPRIRDLAELQLQKWSTGGCSIDKNISKIYKLLSGSPFEGLFSLKELESEFSWLCLLNLTLCYGQIDEYSLESLVQSHLDKFSLPYDDPIGVIFQLYAANENTEKLYKEVRQRTNALDVQFCWYLIQTLRFNGTRVFSKETSDEATFAFAAQLEFAQLHGHSLFVSCFLNDDKAAEDTIKRLVMREITLLRASTNDHILNRLKIPSQLIFNAQALKDRYEGNYLSEVQNLLLGSSYDLAEMAIVTSLGPRLLLSNNPVQNNELKTLREILNEFPDSERDKWSVSINVFEVYLKLVLDNVETQETIDSLISGMKIFYDQYKHCREVAACCNVMSQEIVSKILEKNNPSIGDSKAKLLELPLGQPEKAYLRGEFAQDLMKCTYKI.

Positions 1–16 (MFNKSVNSGFTFGNQN) are enriched in polar residues. The disordered stretch occupies residues 1–36 (MFNKSVNSGFTFGNQNTSTPTSTPAQPSSSLQFPQK). Residues 12–13 (FG) form an FG 1 repeat. Residues 17–30 (TSTPTSTPAQPSSS) show a composition bias toward low complexity. One copy of the GLFG 1 repeat lies at 39 to 42 (GLFG). An FG 2 repeat occupies 79–80 (FG). The GLFG 2 repeat unit spans residues 89–92 (GLFG). One copy of the FG 3 repeat lies at 106 to 107 (FG). Positions 133 to 165 (QNGGLFGNSNNNNITSTTQNGGLFGKPTTTPAG) are disordered. GLFG repeat units lie at residues 136–139 (GLFG), 154–157 (GLFG), 168–171 (GLFG), and 181–184 (GLFG). Residues 139 to 164 (GNSNNNNITSTTQNGGLFGKPTTTPA) show a composition bias toward low complexity. One copy of the GLFG 7; approximate repeat lies at 193–196 (GIFG). A GLFG 8 repeat occupies 206-209 (GLFG). Residues 249–278 (TSSLSDVNGKSDAEPKPIENRRTYSFSSSV) are disordered. The segment covering 257–270 (GKSDAEPKPIENRR) has biased composition (basic and acidic residues). Position 273 is a phosphoserine (Ser-273). A Bipartite nuclear localization signal motif is present at residues 369–385 (RKLKIDSNRSAAKKLKL). Residues 390–450 (PAITKKHMQD…NLNKQDGENT (61 aa)) form a disordered region. Residues 398–523 (QDEQDSSENE…FGKIVIFRSS (126 aa)) are required for autocatalytic cleavage. Phosphoserine occurs at positions 403, 404, and 414. Basic and acidic residues predominate over residues 418-427 (IDRKENRDNN). Residues 428–444 (LDNTYLNGKEQSNNLNK) show a composition bias toward polar residues. A Peptidase S59 domain is found at 458–605 (SFGYWCSPSP…GTWTFKVNHF (148 aa)). A nucleoporin RNA-binding motif (NRM) region spans residues 460 to 604 (GYWCSPSPEQ…GGTWTFKVNH (145 aa)). Phosphoserine occurs at positions 667, 679, and 689. Thr-751 carries the post-translational modification Phosphothreonine.

The protein belongs to the nucleoporin GLFG family. Component of the nuclear pore complex (NPC). NPC constitutes the exclusive means of nucleocytoplasmic transport. NPCs allow the passive diffusion of ions and small molecules and the active, nuclear transport receptor-mediated bidirectional transport of macromolecules such as proteins, RNAs, ribonucleoparticles (RNPs), and ribosomal subunits across the nuclear envelope. Due to its 8-fold rotational symmetry, all subunits are present with 8 copies or multiples thereof. NUP145C is part of the heptameric 0.5 MDa autoassembling NUP84 NPC subcomplex (NUP84, NUP85, NUP120, NUP133, NUP145C, SEC13 and SEH1). NUP145N may bind homomeric RNA and interacts through its FG repeats with karyopherins. Interacts with MLP1 and MLP2. In terms of processing, NUP145 is autocatalytically cleaved in NUP145N and NUP145C.

It is found in the nucleus. The protein resides in the nuclear pore complex. It localises to the nucleus membrane. Its function is as follows. Functions as a component of the nuclear pore complex (NPC). NPC components, collectively referred to as nucleoporins (NUPs), can play the role of both NPC structural components and of docking or interaction partners for transiently associated nuclear transport factors. Active directional transport is assured by both, a Phe-Gly (FG) repeat affinity gradient for these transport factors across the NPC and a transport cofactor concentration gradient across the nuclear envelope (GSP1 and GSP2 GTPases associated predominantly with GTP in the nucleus, with GDP in the cytoplasm). NUP145 is autocatalytically cleaved in vivo in 2 polypeptides which assume different functions in the NPC. NUP145N as one of the FG repeat nucleoporins participates in karyopherin interactions and contains part of the autocatalytic cleavage activity. NUP145C as part of the NUP84 complex is involved in nuclear poly(A)+ RNA and tRNA export. It is also required for normal NPC distribution (probably through interactions with MLP1 and MLP2) and NPC assembly, as well as for normal nuclear envelope organization. The chain is Nucleoporin NUP145 (NUP145) from Saccharomyces cerevisiae (strain ATCC 204508 / S288c) (Baker's yeast).